Here is a 176-residue protein sequence, read N- to C-terminus: MENNEPVVETPEAQNDLPEVERLKGEVEFLKAELEASKNKFLRLYADFENYKKRMVQELEAAQRNGKFDAVRALLGTLDDLERALGFASVKPEDLIPGVRSVLENFTRSLKSLGVEAVPGVGAEFDPRYHEAIGAVEGEEGKVMHVYQQGFKYGDLLVRPARVVVGSGAKPEEAEA.

Belongs to the GrpE family. In terms of assembly, homodimer.

Its subcellular location is the cytoplasm. Participates actively in the response to hyperosmotic and heat shock by preventing the aggregation of stress-denatured proteins, in association with DnaK and GrpE. It is the nucleotide exchange factor for DnaK and may function as a thermosensor. Unfolded proteins bind initially to DnaJ; upon interaction with the DnaJ-bound protein, DnaK hydrolyzes its bound ATP, resulting in the formation of a stable complex. GrpE releases ADP from DnaK; ATP binding to DnaK triggers the release of the substrate protein, thus completing the reaction cycle. Several rounds of ATP-dependent interactions between DnaJ, DnaK and GrpE are required for fully efficient folding. The chain is Protein GrpE from Meiothermus ruber.